Here is a 512-residue protein sequence, read N- to C-terminus: Putative UDP-glucuronosyltransferase ugt-55 (512 aa).

Positions 1 to 22 (MQLLTLPTLIFIFLNYGTPCLS) are cleaved as a signal peptide. Residues 487–507 (ILLYLDSIAMFTLTLLTMILI) form a helical membrane-spanning segment.

The protein belongs to the UDP-glycosyltransferase family.

Its subcellular location is the membrane. It carries out the reaction glucuronate acceptor + UDP-alpha-D-glucuronate = acceptor beta-D-glucuronoside + UDP + H(+). The polypeptide is Putative UDP-glucuronosyltransferase ugt-55 (ugt-55) (Caenorhabditis elegans).